A 207-amino-acid chain; its full sequence is Protein DMP1 (207 aa).

The tract at residues 1–20 (MSETSLLIPKTNSPASSENM) is disordered. Helical transmembrane passes span 33 to 53 (LIKL…PVLT), 64 to 84 (VMSS…CFTD), 121 to 141 (IADF…VLLD), and 159 to 179 (LVMA…ALFP).

The protein belongs to the plant DMP1 protein family. Expressed in leaves, siliques and roots.

It is found in the endoplasmic reticulum membrane. It localises to the vacuole membrane. Functionally, involved in membrane remodeling including fission during breakdown of the endoplasmic reticulum (ER) and the tonoplast during leaf senescence and in membrane fusion during vacuole biogenesis in roots. In Arabidopsis thaliana (Mouse-ear cress), this protein is Protein DMP1.